Reading from the N-terminus, the 500-residue chain is L-arabinose isomerase (500 aa).

Mn(2+) contacts are provided by E306, E333, H350, and H450.

It belongs to the arabinose isomerase family. In terms of assembly, homohexamer. The cofactor is Mn(2+).

The catalysed reaction is beta-L-arabinopyranose = L-ribulose. It participates in carbohydrate degradation; L-arabinose degradation via L-ribulose; D-xylulose 5-phosphate from L-arabinose (bacterial route): step 1/3. In terms of biological role, catalyzes the conversion of L-arabinose to L-ribulose. This is L-arabinose isomerase from Escherichia coli O157:H7.